Consider the following 884-residue polypeptide: Valine--tRNA ligase (884 aa).

Positions 46-56 match the 'HIGH' region motif; the sequence is PNVTGKLHLGH. A 'KMSKS' region motif is present at residues 520-524; that stretch reads KMSKS. Position 523 (lysine 523) interacts with ATP. Residues 809 to 844 are a coiled coil; that stretch reads LADLLNVEEELARLEKELAKWQKELNMVGKKLSNER.

This sequence belongs to the class-I aminoacyl-tRNA synthetase family. ValS type 1 subfamily. As to quaternary structure, monomer.

The protein localises to the cytoplasm. The catalysed reaction is tRNA(Val) + L-valine + ATP = L-valyl-tRNA(Val) + AMP + diphosphate. Catalyzes the attachment of valine to tRNA(Val). As ValRS can inadvertently accommodate and process structurally similar amino acids such as threonine, to avoid such errors, it has a 'posttransfer' editing activity that hydrolyzes mischarged Thr-tRNA(Val) in a tRNA-dependent manner. This is Valine--tRNA ligase from Streptococcus agalactiae serotype III (strain NEM316).